Reading from the N-terminus, the 248-residue chain is Probable transcriptional regulatory protein AZC_0510 (248 aa).

It belongs to the TACO1 family.

It localises to the cytoplasm. In Azorhizobium caulinodans (strain ATCC 43989 / DSM 5975 / JCM 20966 / LMG 6465 / NBRC 14845 / NCIMB 13405 / ORS 571), this protein is Probable transcriptional regulatory protein AZC_0510.